The chain runs to 341 residues: Inner membrane ABC transporter permease protein YejE (341 aa).

Residues 1-21 (MSRLSPVNQARWARFRHNRRG) lie on the Cytoplasmic side of the membrane. Residues 22-42 (YWSLWIFLVLFGLSLCSELIA) form a helical membrane-spanning segment. The Periplasmic portion of the chain corresponds to 43-143 (NDKPLLVRYD…ARILYGTRIS (101 aa)). One can recognise an ABC transmembrane type-1 domain in the interval 140 to 332 (TRISVLFGLM…LLIFIGEAVR (193 aa)). The helical transmembrane segment at 144 to 164 (VLFGLMLTLCSSVMGVLAGAL) threads the bilayer. The Cytoplasmic portion of the chain corresponds to 165–178 (QGYYGGKVDLWGQR). The chain crosses the membrane as a helical span at residues 179–199 (FIEVWSGMPTLFLIILLSSVV). The Periplasmic portion of the chain corresponds to 200-201 (QP). A helical membrane pass occupies residues 202 to 222 (NFWWLLAITVLFGWMSLVGVV). Topologically, residues 223–252 (RAEFLRTRNFDYIRAAQALGVSDRSIILRH) are cytoplasmic. A helical membrane pass occupies residues 253–273 (MLPNAMVATLTFLPFILCSSI). Residues 274–307 (TTLTSLDFLGFGLPLGSPSLGELLLQGKNNLQAP) are Periplasmic-facing. A helical transmembrane segment spans residues 308-328 (WLGITAFLSVAILLSLLIFIG). The Cytoplasmic portion of the chain corresponds to 329–341 (EAVRDAFDPNKAV).

It belongs to the binding-protein-dependent transport system permease family. OppBC subfamily.

The protein resides in the cell inner membrane. Its function is as follows. Probably part of a binding-protein-dependent transport system. Probably responsible for the translocation of the substrate across the membrane. This is Inner membrane ABC transporter permease protein YejE (yejE) from Escherichia coli (strain K12).